The following is a 331-amino-acid chain: Protein mono-ADP-ribosyltransferase PARP11 (331 aa).

Lysine 11 bears the N6-(ADP-ribosyl)lysine mark. The region spanning serine 15–arginine 99 is the WWE domain. ADP-ribosylcysteine is present on residues cysteine 49 and cysteine 65. At aspartate 80 the chain carries ADP-ribosyl aspartic acid. One can recognise a PARP catalytic domain in the interval isoleucine 116–histidine 331.

Belongs to the ARTD/PARP family. Post-translationally, auto-mono-ADP-ribosylated. In terms of tissue distribution, predominantly expressed in testis, preferentially in postmeiotic germ cells. Also detectable in other tissues, including liver, lung, spleen, thymus and brain.

Its subcellular location is the nucleus. The protein resides in the nuclear pore complex. The catalysed reaction is L-aspartyl-[protein] + NAD(+) = 4-O-(ADP-D-ribosyl)-L-aspartyl-[protein] + nicotinamide. It carries out the reaction L-cysteinyl-[protein] + NAD(+) = S-(ADP-D-ribosyl)-L-cysteinyl-[protein] + nicotinamide + H(+). The enzyme catalyses L-glutamyl-[protein] + NAD(+) = 5-O-(ADP-D-ribosyl)-L-glutamyl-[protein] + nicotinamide. It catalyses the reaction L-lysyl-[protein] + NAD(+) = N(6)-(ADP-D-ribosyl)-L-lysyl-[protein] + nicotinamide + H(+). Mono-ADP-ribosyltransferase that mediates mono-ADP-ribosylation of target proteins. Plays a role in nuclear envelope stability and nuclear remodeling during spermiogenesis. Inhibits the type I interferon activated signaling pathway. Mechanistically, mono-ADP-ribosylates beta-TrCP/BTRC to promote IFNAR1 ubiquitination and protect BTRC from ubiquitin-proteasome degradation. In Mus musculus (Mouse), this protein is Protein mono-ADP-ribosyltransferase PARP11.